Reading from the N-terminus, the 440-residue chain is Serine hydroxymethyltransferase (440 aa).

(6S)-5,6,7,8-tetrahydrofolate-binding positions include L119 and G123 to L125. Position 228 is an N6-(pyridoxal phosphate)lysine (K228). S370 to F372 provides a ligand contact to (6S)-5,6,7,8-tetrahydrofolate.

It belongs to the SHMT family. As to quaternary structure, homodimer. Requires pyridoxal 5'-phosphate as cofactor.

The protein resides in the cytoplasm. It catalyses the reaction (6R)-5,10-methylene-5,6,7,8-tetrahydrofolate + glycine + H2O = (6S)-5,6,7,8-tetrahydrofolate + L-serine. Its pathway is one-carbon metabolism; tetrahydrofolate interconversion. It functions in the pathway amino-acid biosynthesis; glycine biosynthesis; glycine from L-serine: step 1/1. Functionally, catalyzes the reversible interconversion of serine and glycine with tetrahydrofolate (THF) serving as the one-carbon carrier. This reaction serves as the major source of one-carbon groups required for the biosynthesis of purines, thymidylate, methionine, and other important biomolecules. Also exhibits THF-independent aldolase activity toward beta-hydroxyamino acids, producing glycine and aldehydes, via a retro-aldol mechanism. This is Serine hydroxymethyltransferase from Chlorobaculum tepidum (strain ATCC 49652 / DSM 12025 / NBRC 103806 / TLS) (Chlorobium tepidum).